The chain runs to 254 residues: MNLKPQNNLLTNENIDHVDIPENDIPMSITEHLEELRQRTLFVFLFFLFATTISFTQIKIIVAILQAPAVGIKFLQLAPGEYFFSSIKVAIYCGIVATTPFAVYQVILYILPGLTGKERKIILPLLISSVLLFITGGIFAYFVLAPAALTFLISYGSDIVEPLWSFEQYFDFILLLLLSTGLAFEIPIIQLLLGVSGTFSSSQMIRAWRYIIIIATIAGAILTPSTDPVTQLIMSSAVLLLYFGGIVILLVLKK.

The next 8 helical transmembrane spans lie at 41-61 (LFVFLFFLFATTISFTQIKII), 64-84 (ILQAPAVGIKFLQLAPGEYFF), 91-111 (IYCGIVATTPFAVYQVILYIL), 125-145 (LLISSVLLFITGGIFAYFVLA), 146-166 (PAALTFLISYGSDIVEPLWSF), 172-192 (FILLLLLSTGLAFEIPIIQLL), 204-224 (MIRAWRYIIIIATIAGAILTP), and 232-252 (LIMSSAVLLLYFGGIVILLVL).

This sequence belongs to the TatC family.

The protein resides in the plastid. The protein localises to the chloroplast membrane. This is an uncharacterized protein from Pyropia yezoensis (Susabi-nori).